The following is a 37-amino-acid chain: Large ribosomal subunit protein bL36 (37 aa).

The protein belongs to the bacterial ribosomal protein bL36 family.

The protein is Large ribosomal subunit protein bL36 of Mycobacterium ulcerans (strain Agy99).